Here is a 218-residue protein sequence, read N- to C-terminus: 3-oxo-tetronate 4-phosphate decarboxylase (218 aa).

The Proton acceptor role is filled by glutamate 86. Zn(2+) contacts are provided by glutamate 86, histidine 105, and histidine 107. Tyrosine 132 serves as the catalytic Proton donor. Histidine 172 contributes to the Zn(2+) binding site.

This sequence belongs to the aldolase class II family. AraD/FucA subfamily. It depends on Zn(2+) as a cofactor.

It carries out the reaction 3-dehydro-4-O-phospho-D-erythronate + H(+) = dihydroxyacetone phosphate + CO2. The enzyme catalyses 3-dehydro-4-O-phospho-L-erythronate + H(+) = dihydroxyacetone phosphate + CO2. Catalyzes the decarboxylation of 3-oxo-tetronate 4-phosphate to dihydroxyacetone phosphate (DHAP) and CO(2). The chain is 3-oxo-tetronate 4-phosphate decarboxylase from Pectobacterium atrosepticum (strain SCRI 1043 / ATCC BAA-672) (Erwinia carotovora subsp. atroseptica).